A 286-amino-acid chain; its full sequence is Aquaporin NIP1-3 (286 aa).

Residues M1–N44 are disordered. The span at Q11 to N31 shows a compositional bias: basic and acidic residues. The segment covering Q34 to N44 has biased composition (polar residues). The next 2 membrane-spanning stretches (helical) occupy residues V56–V76 and V84–V104. The NPA 1 signature appears at N113 to A115. The next 3 helical transmembrane spans lie at V131–F153, S172–T192, and L200–S220. Residues N225–A227 carry the NPA 2 motif. A helical membrane pass occupies residues Y239–A259.

Belongs to the MIP/aquaporin (TC 1.A.8) family. NIP (TC 1.A.8.12) subfamily.

It localises to the membrane. Its function is as follows. Aquaporins facilitate the transport of water and small neutral solutes across cell membranes. The protein is Aquaporin NIP1-3 (NIP1-3) of Oryza sativa subsp. japonica (Rice).